Reading from the N-terminus, the 346-residue chain is Phosphoribosylformylglycinamidine cyclo-ligase (346 aa).

Belongs to the AIR synthase family.

It is found in the cytoplasm. The enzyme catalyses 2-formamido-N(1)-(5-O-phospho-beta-D-ribosyl)acetamidine + ATP = 5-amino-1-(5-phospho-beta-D-ribosyl)imidazole + ADP + phosphate + H(+). Its pathway is purine metabolism; IMP biosynthesis via de novo pathway; 5-amino-1-(5-phospho-D-ribosyl)imidazole from N(2)-formyl-N(1)-(5-phospho-D-ribosyl)glycinamide: step 2/2. The sequence is that of Phosphoribosylformylglycinamidine cyclo-ligase from Bacillus cereus (strain B4264).